The sequence spans 494 residues: MTSADGQKDLQSYMDAVTAMLKLPPSDRRNWYRNGFIHLMDCPHGDWWFTSWHRGYLGYFEETCRELSGNPDFALPYWDWTANPEVLPPLFGTILDPVNSSAYIPDHNRFQDIMQEPIKAYWDSLSPAQLQQQNLRGYPDFDALWSDAMASFANQPNARFLTAQNPKLNPATQTAVDIDTIKASLAPTTFANDAGAPGLAFNSPVSSSHQVAPVGFSILEGQPHNRVHMSVGGQSAPYGLMSQNLSPLDPIFFLHHCNIDRLWDVWTRKQQAMGLPVGPTADQQTQYDPEPYLFYVNADGSPVSDKTRAADYLEIGDFDYDYDPGSGEEVIPVATAGRSAPIPALEAAVSASAAVAINKPATAKLTVSQELVDVAAKPSEQSRQFAKVSIAPPMDVGGLNFLVFISPEGTTPDLNPDGPDFAGSFEFFGVRHHHTDTVSFTIPIDKALDRLIDDGRLKAGEPIDFAVVVAQEGKRVEGSMPAKAQLTDIQVGSF.

H38, H53, C64, H224, H228, and H256 together coordinate Cu cation.

This sequence belongs to the tyrosinase family. The cofactor is Cu(2+).

The enzyme catalyses 2 L-dopa + O2 = 2 L-dopaquinone + 2 H2O. It carries out the reaction L-tyrosine + O2 = L-dopaquinone + H2O. This is Tyrosinase (mepA) from Rhizobium meliloti (Ensifer meliloti).